Reading from the N-terminus, the 299-residue chain is Nucleotide-binding protein Moth_0258 (299 aa).

14-21 contributes to the ATP binding site; it reads GLSGAGKT. 68-71 provides a ligand contact to GTP; it reads DIRG.

Belongs to the RapZ-like family.

Displays ATPase and GTPase activities. This chain is Nucleotide-binding protein Moth_0258, found in Moorella thermoacetica (strain ATCC 39073 / JCM 9320).